The chain runs to 327 residues: Probable cell division protein WhiA (327 aa).

A DNA-binding region (H-T-H motif) is located at residues 275–308; sequence SLEELGRLADPQMTKDAVAGRIRRLLTMADKRAE.

Belongs to the WhiA family.

Functionally, involved in cell division and chromosome segregation. This is Probable cell division protein WhiA from Corynebacterium glutamicum (strain R).